The following is a 348-amino-acid chain: Nicotinate-nucleotide--dimethylbenzimidazole phosphoribosyltransferase (348 aa).

Residue Glu317 is the Proton acceptor of the active site.

Belongs to the CobT family.

It catalyses the reaction 5,6-dimethylbenzimidazole + nicotinate beta-D-ribonucleotide = alpha-ribazole 5'-phosphate + nicotinate + H(+). Its pathway is nucleoside biosynthesis; alpha-ribazole biosynthesis; alpha-ribazole from 5,6-dimethylbenzimidazole: step 1/2. Its function is as follows. Catalyzes the synthesis of alpha-ribazole-5'-phosphate from nicotinate mononucleotide (NAMN) and 5,6-dimethylbenzimidazole (DMB). The sequence is that of Nicotinate-nucleotide--dimethylbenzimidazole phosphoribosyltransferase from Clostridioides difficile (strain 630) (Peptoclostridium difficile).